A 254-amino-acid chain; its full sequence is Leucyl/phenylalanyl-tRNA--protein transferase (254 aa).

The protein belongs to the L/F-transferase family.

It is found in the cytoplasm. The enzyme catalyses N-terminal L-lysyl-[protein] + L-leucyl-tRNA(Leu) = N-terminal L-leucyl-L-lysyl-[protein] + tRNA(Leu) + H(+). It catalyses the reaction N-terminal L-arginyl-[protein] + L-leucyl-tRNA(Leu) = N-terminal L-leucyl-L-arginyl-[protein] + tRNA(Leu) + H(+). It carries out the reaction L-phenylalanyl-tRNA(Phe) + an N-terminal L-alpha-aminoacyl-[protein] = an N-terminal L-phenylalanyl-L-alpha-aminoacyl-[protein] + tRNA(Phe). In terms of biological role, functions in the N-end rule pathway of protein degradation where it conjugates Leu, Phe and, less efficiently, Met from aminoacyl-tRNAs to the N-termini of proteins containing an N-terminal arginine or lysine. The chain is Leucyl/phenylalanyl-tRNA--protein transferase from Burkholderia cenocepacia (strain ATCC BAA-245 / DSM 16553 / LMG 16656 / NCTC 13227 / J2315 / CF5610) (Burkholderia cepacia (strain J2315)).